Reading from the N-terminus, the 378-residue chain is MTAQTSAVSVISAANRLVAKVGSSLVTNEGRGLDRAAVDHWAAQIAALHQQGKQVVLVSSGAIAEGMARLGWRKRPSAMHELQAAAAVGQMGLCQAYEAAFAEFGLRTAQILLTHEDLADRHRYLNARSTLFALLRLGVVPIVNENDTVVTDEIRFGDNDTLGALVTNLIEADALIILTDQRGLYEADPRCDPAARFVAHAQAGDAALEAMAGGAGSGVGTGGMLTKILAAKRAAHSGAHTVIASGRERNVLTRLAQGECIGTELRAVLPVWSARKQWLADHLRLRGRVVLDDGAVHALLHEGKSLLPIGVAEVQGEFERGDVVACVDMHGRECARGLINYSSADTRRILRQPSSQIARILGSMTDPELMHRDNLVVT.

Position 20 (lysine 20) interacts with ATP. Positions 60, 147, and 159 each coordinate substrate. ATP contacts are provided by residues 179 to 180 (TD) and 221 to 227 (TGGMLTK). The region spanning 286–364 (RGRVVLDDGA…SQIARILGSM (79 aa)) is the PUA domain.

This sequence belongs to the glutamate 5-kinase family.

Its subcellular location is the cytoplasm. The enzyme catalyses L-glutamate + ATP = L-glutamyl 5-phosphate + ADP. Its pathway is amino-acid biosynthesis; L-proline biosynthesis; L-glutamate 5-semialdehyde from L-glutamate: step 1/2. Its function is as follows. Catalyzes the transfer of a phosphate group to glutamate to form L-glutamate 5-phosphate. In Bordetella parapertussis (strain 12822 / ATCC BAA-587 / NCTC 13253), this protein is Glutamate 5-kinase.